The sequence spans 146 residues: Anti-sigma F factor (146 aa).

This sequence belongs to the anti-sigma-factor family.

It catalyses the reaction L-seryl-[protein] + ATP = O-phospho-L-seryl-[protein] + ADP + H(+). The catalysed reaction is L-threonyl-[protein] + ATP = O-phospho-L-threonyl-[protein] + ADP + H(+). In terms of biological role, binds to sigma F and blocks its ability to form an RNA polymerase holoenzyme (E-sigma F). Phosphorylates SpoIIAA on a serine residue. This phosphorylation may enable SpoIIAA to act as an anti-anti-sigma factor that counteracts SpoIIAB and thus releases sigma F from inhibition. In Anoxybacillus flavithermus (strain DSM 21510 / WK1), this protein is Anti-sigma F factor.